A 121-amino-acid polypeptide reads, in one-letter code: Large ribosomal subunit protein uL14 (121 aa).

Belongs to the universal ribosomal protein uL14 family. In terms of assembly, part of the 50S ribosomal subunit. Forms a cluster with proteins L3 and L19. In the 70S ribosome, L14 and L19 interact and together make contacts with the 16S rRNA in bridges B5 and B8.

In terms of biological role, binds to 23S rRNA. Forms part of two intersubunit bridges in the 70S ribosome. The polypeptide is Large ribosomal subunit protein uL14 (Parasynechococcus marenigrum (strain WH8102)).